Here is a 177-residue protein sequence, read N- to C-terminus: DELTA-stichotoxin-Hmg2b (177 aa).

Residues 3 to 12 form a plays an important role in the hemolytic activity region; that stretch reads ALAGTIIAGA. The segment at 11–30 is N-terminal region; sequence GASLGFQILDKVLGELGKVS. Positions 54, 87, 105, 107, 133, 137, and 138 each coordinate phosphocholine.

It belongs to the actinoporin family. Sea anemone subfamily. As to quaternary structure, octamer or nonamer in membranes. Monomer in the soluble state.

Its subcellular location is the secreted. It is found in the nematocyst. The protein resides in the target cell membrane. Pore-forming protein that forms cations-selective hydrophilic pores of around 1 nm and causes cytolysis. Pore formation is a multi-step process that involves specific recognition of membrane sphingomyelin (but neither cholesterol nor phosphatidylcholine) using aromatic rich region and adjacent phosphocholine (POC) binding site, firm binding to the membrane (mainly driven by hydrophobic interactions) accompanied by the transfer of the N-terminal region to the lipid-water interface and finally pore formation after oligomerization of monomers This toxin shows hemolytic activity. The sequence is that of DELTA-stichotoxin-Hmg2b from Heteractis magnifica (Magnificent sea anemone).